Consider the following 406-residue polypeptide: Pygopus homolog 2 (406 aa).

Disordered regions lie at residues 1–73 (MAAS…DHLV) and 106–323 (VQGG…PQPP). N-acetylalanine is present on alanine 2. The residue at position 40 (serine 40) is a Phosphoserine. A Nuclear localization signal motif is present at residues 41 to 47 (PEKKRRK). 2 stretches are compositionally biased toward pro residues: residues 131-141 (RQPPPFPPNPM) and 149-158 (PQGPGYPPPG). Positions 164–179 (SQPFNQPLGQNFSPPS) are enriched in polar residues. Residues 236-252 (SLPPNTSPFPGPDPGFP) are compositionally biased toward pro residues. Residues 285 to 296 (NGNQPSFPPNSS) show a composition bias toward polar residues. The residue at position 302 (threonine 302) is a Phosphothreonine. A PHD-type zinc finger spans residues 327–385 (VYPCGACRSEVNDDQDAILCEASCQKWFHRECTGMTESAYGLLTTEASAVWACDLCLKT).

As to quaternary structure, binds to BCL9 via the PHD-type zinc finger motif, and thereby becomes part of the nuclear beta-catenin/TCF complex.

It localises to the nucleus. Functionally, involved in signal transduction through the Wnt pathway. The sequence is that of Pygopus homolog 2 (PYGO2) from Homo sapiens (Human).